The primary structure comprises 294 residues: Release factor glutamine methyltransferase (294 aa).

S-adenosyl-L-methionine-binding positions include 131-135 (GTGSG), aspartate 154, and asparagine 202. A substrate-binding site is contributed by 202–205 (NPPY).

Belongs to the protein N5-glutamine methyltransferase family. PrmC subfamily.

The catalysed reaction is L-glutaminyl-[peptide chain release factor] + S-adenosyl-L-methionine = N(5)-methyl-L-glutaminyl-[peptide chain release factor] + S-adenosyl-L-homocysteine + H(+). Methylates the class 1 translation termination release factors RF1/PrfA and RF2/PrfB on the glutamine residue of the universally conserved GGQ motif. This chain is Release factor glutamine methyltransferase, found in Chlorobaculum tepidum (strain ATCC 49652 / DSM 12025 / NBRC 103806 / TLS) (Chlorobium tepidum).